We begin with the raw amino-acid sequence, 132 residues long: Phosphoribosyl-AMP cyclohydrolase (132 aa).

Mg(2+) is bound at residue Asp79. A Zn(2+)-binding site is contributed by Cys80. Residues Asp81 and Asp83 each contribute to the Mg(2+) site. The Zn(2+) site is built by Cys100 and Cys107.

Belongs to the PRA-CH family. In terms of assembly, homodimer. Mg(2+) is required as a cofactor. It depends on Zn(2+) as a cofactor.

The protein localises to the cytoplasm. It carries out the reaction 1-(5-phospho-beta-D-ribosyl)-5'-AMP + H2O = 1-(5-phospho-beta-D-ribosyl)-5-[(5-phospho-beta-D-ribosylamino)methylideneamino]imidazole-4-carboxamide. It participates in amino-acid biosynthesis; L-histidine biosynthesis; L-histidine from 5-phospho-alpha-D-ribose 1-diphosphate: step 3/9. Catalyzes the hydrolysis of the adenine ring of phosphoribosyl-AMP. The chain is Phosphoribosyl-AMP cyclohydrolase from Delftia acidovorans (strain DSM 14801 / SPH-1).